Reading from the N-terminus, the 352-residue chain is Phenylalanine--tRNA ligase alpha subunit (352 aa).

Glu258 contacts Mg(2+).

Belongs to the class-II aminoacyl-tRNA synthetase family. Phe-tRNA synthetase alpha subunit type 1 subfamily. Tetramer of two alpha and two beta subunits. Mg(2+) is required as a cofactor.

Its subcellular location is the cytoplasm. It carries out the reaction tRNA(Phe) + L-phenylalanine + ATP = L-phenylalanyl-tRNA(Phe) + AMP + diphosphate + H(+). In Staphylococcus epidermidis (strain ATCC 35984 / DSM 28319 / BCRC 17069 / CCUG 31568 / BM 3577 / RP62A), this protein is Phenylalanine--tRNA ligase alpha subunit.